The sequence spans 93 residues: Integration host factor subunit beta (93 aa).

Belongs to the bacterial histone-like protein family. Heterodimer of an alpha and a beta chain.

Functionally, this protein is one of the two subunits of integration host factor, a specific DNA-binding protein that functions in genetic recombination as well as in transcriptional and translational control. The polypeptide is Integration host factor subunit beta (ihfB) (Mannheimia haemolytica (Pasteurella haemolytica)).